The chain runs to 252 residues: Cell division protein ZapD (252 aa).

The protein belongs to the ZapD family. Interacts with FtsZ.

Its subcellular location is the cytoplasm. Cell division factor that enhances FtsZ-ring assembly. Directly interacts with FtsZ and promotes bundling of FtsZ protofilaments, with a reduction in FtsZ GTPase activity. In Cupriavidus necator (strain ATCC 17699 / DSM 428 / KCTC 22496 / NCIMB 10442 / H16 / Stanier 337) (Ralstonia eutropha), this protein is Cell division protein ZapD.